The sequence spans 229 residues: Putative N-acetylmannosamine-6-phosphate 2-epimerase (229 aa).

Belongs to the NanE family.

The enzyme catalyses an N-acyl-D-glucosamine 6-phosphate = an N-acyl-D-mannosamine 6-phosphate. Its pathway is amino-sugar metabolism; N-acetylneuraminate degradation; D-fructose 6-phosphate from N-acetylneuraminate: step 3/5. Functionally, converts N-acetylmannosamine-6-phosphate (ManNAc-6-P) to N-acetylglucosamine-6-phosphate (GlcNAc-6-P). The chain is Putative N-acetylmannosamine-6-phosphate 2-epimerase from Pediococcus pentosaceus (strain ATCC 25745 / CCUG 21536 / LMG 10740 / 183-1w).